A 254-amino-acid chain; its full sequence is Ribonuclease HII (254 aa).

The 185-residue stretch at 70–254 (QAIAGIDEVG…TFEPVKSMLG (185 aa)) folds into the RNase H type-2 domain. The a divalent metal cation site is built by D76, E77, and D168.

The protein belongs to the RNase HII family. It depends on Mn(2+) as a cofactor. Mg(2+) serves as cofactor.

The protein resides in the cytoplasm. The enzyme catalyses Endonucleolytic cleavage to 5'-phosphomonoester.. Endonuclease that specifically degrades the RNA of RNA-DNA hybrids. This chain is Ribonuclease HII, found in Streptococcus gordonii (strain Challis / ATCC 35105 / BCRC 15272 / CH1 / DL1 / V288).